Here is a 142-residue protein sequence, read N- to C-terminus: Large ribosomal subunit protein uL16 (142 aa).

It belongs to the universal ribosomal protein uL16 family. As to quaternary structure, part of the 50S ribosomal subunit.

In terms of biological role, binds 23S rRNA and is also seen to make contacts with the A and possibly P site tRNAs. The protein is Large ribosomal subunit protein uL16 of Thermotoga neapolitana (strain ATCC 49049 / DSM 4359 / NBRC 107923 / NS-E).